A 162-amino-acid chain; its full sequence is Cyclic pyranopterin monophosphate synthase (162 aa).

Residues 79–81 (LCH) and 117–118 (ME) each bind substrate. D132 is a catalytic residue.

The protein belongs to the MoaC family. As to quaternary structure, homohexamer; trimer of dimers.

The enzyme catalyses (8S)-3',8-cyclo-7,8-dihydroguanosine 5'-triphosphate = cyclic pyranopterin phosphate + diphosphate. Its pathway is cofactor biosynthesis; molybdopterin biosynthesis. Its function is as follows. Catalyzes the conversion of (8S)-3',8-cyclo-7,8-dihydroguanosine 5'-triphosphate to cyclic pyranopterin monophosphate (cPMP). This Bordetella petrii (strain ATCC BAA-461 / DSM 12804 / CCUG 43448) protein is Cyclic pyranopterin monophosphate synthase.